We begin with the raw amino-acid sequence, 354 residues long: Rhodopsin (354 aa).

Over methionine 1–lysine 36 the chain is Extracellular. Residues asparagine 2 and asparagine 15 are each glycosylated (N-linked (GlcNAc...) asparagine). The helical transmembrane segment at tyrosine 37 to valine 61 threads the bilayer. Over threonine 62–asparagine 73 the chain is Cytoplasmic. Residues tyrosine 74–tyrosine 96 traverse the membrane as a helical segment. Residues threonine 97 to cysteine 110 are Extracellular-facing. Cysteine 110 and cysteine 187 are oxidised to a cystine. Residues tyrosine 111 to isoleucine 133 form a helical membrane-spanning segment. The 'Ionic lock' involved in activated form stabilization signature appears at glutamate 134 to tyrosine 136. Topologically, residues glutamate 134 to histidine 152 are cytoplasmic. The chain crosses the membrane as a helical span at residues alanine 153 to phenylalanine 173. The Extracellular portion of the chain corresponds to glycine 174–serine 202. Residues phenylalanine 203–glycine 224 traverse the membrane as a helical segment. The Cytoplasmic portion of the chain corresponds to arginine 225–arginine 252. The helical transmembrane segment at methionine 253 to tyrosine 274 threads the bilayer. Residues isoleucine 275–isoleucine 286 lie on the Extracellular side of the membrane. The helical transmembrane segment at phenylalanine 287 to methionine 308 threads the bilayer. An N6-(retinylidene)lysine modification is found at lysine 296. Residues leucine 309–alanine 354 lie on the Cytoplasmic side of the membrane. Residues cysteine 322 and cysteine 323 are each lipidated (S-palmitoyl cysteine). Residues glutamate 331 to alanine 354 form a disordered region. Residues serine 334 to alanine 354 are compositionally biased toward low complexity.

It belongs to the G-protein coupled receptor 1 family. Opsin subfamily. In terms of processing, contains one covalently linked retinal chromophore. Upon light absorption, the covalently bound 11-cis-retinal is converted to all-trans-retinal. After hydrolysis of the Schiff base and release of the covalently bound all-trans-retinal, active rhodopsin is regenerated by binding of a fresh molecule of 11-cis-retinal. Retina. Localized in the ventral part of the retina.

It localises to the membrane. It is found in the cell projection. The protein resides in the cilium. The protein localises to the photoreceptor outer segment. Photoreceptor required for image-forming vision at low light intensity. Required for photoreceptor cell viability after birth. May use a mixture of retinal and 3-dehydroretinal as visual pigment. Light-induced isomerization of 11-cis to all-trans retinal triggers a conformational change that activates signaling via G-proteins. Subsequent receptor phosphorylation mediates displacement of the bound G-protein alpha subunit by arrestin and terminates signaling. The chain is Rhodopsin (RHO) from Aquarana catesbeiana (American bullfrog).